A 327-amino-acid chain; its full sequence is Putative cyclin-dependent kinase F-2 (327 aa).

The 292-residue stretch at 4–295 (YECLGKIGEG…AADALRCAWF (292 aa)) folds into the Protein kinase domain. ATP contacts are provided by residues 10–18 (IGEGAAGVV) and K33. Catalysis depends on D134, which acts as the Proton acceptor. The residue at position 167 (T167) is a Phosphothreonine.

The protein belongs to the protein kinase superfamily. CMGC Ser/Thr protein kinase family. CDC2/CDKX subfamily.

It carries out the reaction L-seryl-[protein] + ATP = O-phospho-L-seryl-[protein] + ADP + H(+). It catalyses the reaction L-threonyl-[protein] + ATP = O-phospho-L-threonyl-[protein] + ADP + H(+). The catalysed reaction is [DNA-directed RNA polymerase] + ATP = phospho-[DNA-directed RNA polymerase] + ADP + H(+). The sequence is that of Putative cyclin-dependent kinase F-2 (CDKF-2) from Oryza sativa subsp. japonica (Rice).